Consider the following 209-residue polypeptide: Large ribosomal subunit protein uL3 (209 aa).

Residue Gln150 is modified to N5-methylglutamine.

Belongs to the universal ribosomal protein uL3 family. In terms of assembly, part of the 50S ribosomal subunit. Forms a cluster with proteins L14 and L19. Methylated by PrmB.

In terms of biological role, one of the primary rRNA binding proteins, it binds directly near the 3'-end of the 23S rRNA, where it nucleates assembly of the 50S subunit. The polypeptide is Large ribosomal subunit protein uL3 (Citrobacter koseri (strain ATCC BAA-895 / CDC 4225-83 / SGSC4696)).